We begin with the raw amino-acid sequence, 499 residues long: Lysine--tRNA ligase (499 aa).

Mg(2+) contacts are provided by E407 and E414.

Belongs to the class-II aminoacyl-tRNA synthetase family. Homodimer. Requires Mg(2+) as cofactor.

The protein resides in the cytoplasm. It catalyses the reaction tRNA(Lys) + L-lysine + ATP = L-lysyl-tRNA(Lys) + AMP + diphosphate. The protein is Lysine--tRNA ligase of Lactiplantibacillus plantarum (strain ATCC BAA-793 / NCIMB 8826 / WCFS1) (Lactobacillus plantarum).